Here is a 222-residue protein sequence, read N- to C-terminus: Glutathione transferase GST 23 (222 aa).

The region spanning 4-83 (KGVKVLGMWA…YIDEVWKGGY (80 aa)) is the GST N-terminal domain. Glutathione is bound by residues Ser-14, Lys-41, Val-55, and 67–68 (ES). The region spanning 89–220 (DPYERAQARF…ANKARREQLL (132 aa)) is the GST C-terminal domain.

The protein belongs to the GST superfamily.

It carries out the reaction RX + glutathione = an S-substituted glutathione + a halide anion + H(+). Involved in multiple disease resistance (MDR). This chain is Glutathione transferase GST 23, found in Zea mays (Maize).